The primary structure comprises 89 residues: Small ribosomal subunit protein uS14A (89 aa).

Positions 34–54 are disordered; the sequence is ESLRKLPRDSNPNRLKNRDKI.

This sequence belongs to the universal ribosomal protein uS14 family. As to quaternary structure, part of the 30S ribosomal subunit. Contacts proteins S3 and S10.

Its function is as follows. Binds 16S rRNA, required for the assembly of 30S particles and may also be responsible for determining the conformation of the 16S rRNA at the A site. This is Small ribosomal subunit protein uS14A from Streptococcus pyogenes serotype M1.